Here is a 104-residue protein sequence, read N- to C-terminus: Small ribosomal subunit protein bS18 (104 aa).

Residues 1–14 (MMNNEHDNFQKEVE) are compositionally biased toward basic and acidic residues. The disordered stretch occupies residues 1 to 25 (MMNNEHDNFQKEVETTTETTFNREE).

Belongs to the bacterial ribosomal protein bS18 family. In terms of assembly, part of the 30S ribosomal subunit. Forms a tight heterodimer with protein bS6.

Binds as a heterodimer with protein bS6 to the central domain of the 16S rRNA, where it helps stabilize the platform of the 30S subunit. This chain is Small ribosomal subunit protein bS18, found in Mycoplasma pneumoniae (strain ATCC 29342 / M129 / Subtype 1) (Mycoplasmoides pneumoniae).